Here is an 822-residue protein sequence, read N- to C-terminus: Structure-specific endonuclease subunit SLX4 (822 aa).

6 disordered regions span residues 1–39 (MSHL…PSAS), 73–117 (TPAV…PRPL), 277–362 (GTTN…GVSD), 390–418 (RVSS…TSVS), 456–507 (KSHE…SGQL), and 589–676 (KNSA…QASS). Over residues 13–39 (SPSPSQIFGSSTTPVATNSTHSEPSAS) the composition is skewed to polar residues. A compositionally biased stretch (low complexity) spans 280-294 (NSSSSEGSSNKSSGK). Over residues 310 to 320 (VTTITSLSTAQ) the composition is skewed to polar residues. The segment covering 342 to 354 (GKRSKSQTKKGGN) has biased composition (basic residues). A compositionally biased stretch (low complexity) spans 460 to 470 (SSTLTLPSTST). Residues 471-484 (NASNQGFSSQNTIN) are compositionally biased toward polar residues. Positions 490–506 (SQTTSTTTESTGVESGQ) are enriched in low complexity. Positions 589-612 (KNSAPTSLPANNANPPDSHASGQK) are enriched in polar residues. Over residues 627–636 (TTKRASKAPQ) the composition is skewed to basic residues. Over residues 637-650 (KKQSTSSTSHSAKA) the composition is skewed to low complexity.

The protein belongs to the SLX4 family. In terms of assembly, forms a heterodimer with SLX1. Post-translationally, phosphorylated in response to DNA damage.

Its subcellular location is the nucleus. In terms of biological role, regulatory subunit of the SLX1-SLX4 structure-specific endonuclease that resolves DNA secondary structures generated during DNA repair and recombination. Has endonuclease activity towards branched DNA substrates, introducing single-strand cuts in duplex DNA close to junctions with ss-DNA. The protein is Structure-specific endonuclease subunit SLX4 of Coccidioides immitis (strain RS) (Valley fever fungus).